Consider the following 192-residue polypeptide: uncharacterized protein (192 aa).

Disordered stretches follow at residues 1–37 and 146–192; these read MASSCPGTPSPAGLPPPSVATPGETLGPAAPPEPAFP and ARGP…EQNK. Composition is skewed to pro residues over residues 8-19 and 159-180; these read TPSPAGLPPPSV and APPPPSRSPRPALPATAPPGWP.

This is an uncharacterized protein from Homo sapiens (Human).